The sequence spans 135 residues: Class I hydrophobin 15 (135 aa).

The N-terminal stretch at Met1 to Ala21 is a signal peptide. Cystine bridges form between Cys50–Cys113, Cys57–Cys107, Cys58–Cys97, and Cys114–Cys127. Asn131 is a glycosylation site (N-linked (GlcNAc...) asparagine).

The protein belongs to the fungal hydrophobin family. Self-assembles to form functional amyloid fibrils called rodlets. Self-assembly into fibrillar rodlets occurs spontaneously at hydrophobic:hydrophilic interfaces and the rodlets further associate laterally to form amphipathic monolayers.

The protein localises to the secreted. The protein resides in the cell wall. Aerial growth, conidiation, and dispersal of filamentous fungi in the environment rely upon a capability of their secreting small amphipathic proteins called hydrophobins (HPBs) with low sequence identity. Class I can self-assemble into an outermost layer of rodlet bundles on aerial cell surfaces, conferring cellular hydrophobicity that supports fungal growth, development and dispersal; whereas Class II form highly ordered films at water-air interfaces through intermolecular interactions but contribute nothing to the rodlet structure. The polypeptide is Class I hydrophobin 15 (Pleurotus ostreatus (strain PC15) (Oyster mushroom)).